A 328-amino-acid polypeptide reads, in one-letter code: Glyoxylate reductase/hydroxypyruvate reductase (328 aa).

A Phosphoserine modification is found at serine 36. 83–84 (VG) provides a ligand contact to substrate. Residues 162–164 (GRI), 185–188 (RQPR), serine 217, and isoleucine 243 contribute to the NADP(+) site. The substrate site is built by arginine 245 and aspartate 269. Serine 272 carries the post-translational modification Phosphoserine. Residue histidine 293 is the Proton donor of the active site. 293 to 296 (HIGS) is a substrate binding site. Glycine 295 contributes to the NADP(+) binding site. Threonine 298 is modified (phosphothreonine).

Belongs to the D-isomer specific 2-hydroxyacid dehydrogenase family. In terms of assembly, homodimer. Ubiquitous. Most abundantly expressed in the liver.

It catalyses the reaction glycolate + NADP(+) = glyoxylate + NADPH + H(+). The enzyme catalyses (R)-glycerate + NAD(+) = 3-hydroxypyruvate + NADH + H(+). It carries out the reaction (R)-glycerate + NADP(+) = 3-hydroxypyruvate + NADPH + H(+). In terms of biological role, enzyme with hydroxy-pyruvate reductase, glyoxylate reductase and D-glycerate dehydrogenase enzymatic activities. Reduces hydroxypyruvate to D-glycerate, glyoxylate to glycolate, oxidizes D-glycerate to hydroxypyruvate. This Homo sapiens (Human) protein is Glyoxylate reductase/hydroxypyruvate reductase (GRHPR).